We begin with the raw amino-acid sequence, 275 residues long: NH(3)-dependent NAD(+) synthetase (275 aa).

46–53 (GISGGQDS) provides a ligand contact to ATP. Asp-52 contributes to the Mg(2+) binding site. Residue Arg-140 coordinates deamido-NAD(+). Thr-160 is an ATP binding site. A Mg(2+)-binding site is contributed by Glu-165. Residues Lys-173 and Asp-180 each coordinate deamido-NAD(+). Positions 189 and 211 each coordinate ATP. 260-261 (HK) provides a ligand contact to deamido-NAD(+).

This sequence belongs to the NAD synthetase family. Homodimer.

It carries out the reaction deamido-NAD(+) + NH4(+) + ATP = AMP + diphosphate + NAD(+) + H(+). Its pathway is cofactor biosynthesis; NAD(+) biosynthesis; NAD(+) from deamido-NAD(+) (ammonia route): step 1/1. Catalyzes the ATP-dependent amidation of deamido-NAD to form NAD. Uses ammonia as a nitrogen source. The protein is NH(3)-dependent NAD(+) synthetase of Escherichia coli O45:K1 (strain S88 / ExPEC).